The primary structure comprises 2594 residues: Immunoglobulin superfamily member 10 (2594 aa).

Positions 1 to 25 (MQKRGREVSCLLISLTAICLVVTPG) are cleaved as a signal peptide. The 28-residue stretch at 29–56 (CPRRCACYVPTEVHCTFRYLTSIPDGIP) folds into the LRRNT domain. LRR repeat units follow at residues 58–79 (NVERVNLGYNSLTRLTENDFSG), 82–103 (RLELLMLHSNGIHRVSDKTFSG), 106–127 (SLQVLKMSYNKVQIIEKDTLYG), 130–151 (SLTRLHLDHNNIEFINPEAFYG), 154–175 (LLRLVHLEGNRLTKLHPDTFVS), and 186–207 (FIKYLYLSDNFLTSLPKEMVSS). An LRRCT domain is found at 219-281 (NPWTCDCHLK…VPSGSFLCTK (63 aa)). A glycan (N-linked (GlcNAc...) asparagine) is linked at Asn439. Ig-like C2-type domains are found at residues 461–567 (PKAE…YRIT) and 571–661 (PYVE…FQVS). Disulfide bonds link Cys497-Cys551 and Cys595-Cys645. N-linked (GlcNAc...) asparagine glycosylation occurs at Asn627. Residues 670–685 (IEHDRDIDGSGLEEPK) are compositionally biased toward basic and acidic residues. 2 disordered regions span residues 670–725 (IEHD…RDLT) and 963–1008 (VSSN…GRER). The span at 715–725 (IHKKNKHRDLT) shows a compositional bias: basic residues. A compositionally biased stretch (basic and acidic residues) spans 972-984 (TTKDPGFSKRPSD). Residues 985–1003 (SHTTAPSLFQTPRNNSTGN) are compositionally biased toward polar residues. N-linked (GlcNAc...) asparagine glycosylation occurs at Asn1044. 3 disordered regions span residues 1228–1251 (TATKPPEKAPLLPTDHGSSSPSTT), 1333–1364 (VRSKKAKDQTKGSLKNRKGPTITPRQISGYST), and 1428–1457 (SQESTAMKRASATPPLLSSGAPRMPTPSPP). Basic and acidic residues predominate over residues 1333–1342 (VRSKKAKDQT). The span at 1355–1364 (TPRQISGYST) shows a compositional bias: polar residues. 10 consecutive Ig-like C2-type domains span residues 1619–1710 (PRII…VTLS), 1715–1807 (PARI…VKIQ), 1812–1901 (PPVI…RRVV), 1912–2005 (PRIE…VRLR), 2008–2106 (PAKI…VHLT), 2112–2200 (PRIR…YKLD), 2205–2302 (PPLI…LKVL), 2308–2398 (PTFR…ILLE), 2403–2493 (PVIL…VPVT), and 2499–2592 (PRII…TYIQ). Cystine bridges form between Cys1641–Cys1694, Cys1738–Cys1791, and Cys1835–Cys1888. The LRR 11 repeat unit spans residues 1658–1681 (SGREISRGIQKTRFHVLPNGTLSI). Asn1676, Asn1780, Asn1870, and Asn1933 each carry an N-linked (GlcNAc...) asparagine glycan. Intrachain disulfides connect Cys1934–Cys1987, Cys2031–Cys2090, Cys2134–Cys2184, Cys2232–Cys2284, Cys2330–Cys2382, Cys2425–Cys2477, and Cys2521–Cys2576. Asn2072 carries N-linked (GlcNAc...) asparagine glycosylation. Asn2364 carries N-linked (GlcNAc...) asparagine glycosylation. Tyr2574 bears the Phosphotyrosine mark.

In terms of tissue distribution, in the embryo, expressed in the nasal mesenchyme.

It is found in the secreted. Involved in the control of early migration of neurons expressing gonadotropin-releasing hormone (GNRH neurons). May be involved in the maintenance of osteochondroprogenitor cells pool. The sequence is that of Immunoglobulin superfamily member 10 (Igsf10) from Mus musculus (Mouse).